Consider the following 132-residue polypeptide: Small ribosomal subunit protein uS11 (132 aa).

Residues 1 to 21 are disordered; that stretch reads MAAPKSAVRKPRRKDKKNIAV. Residues 7–16 are compositionally biased toward basic residues; sequence AVRKPRRKDK.

Belongs to the universal ribosomal protein uS11 family. Part of the 30S ribosomal subunit. Interacts with proteins S7 and S18. Binds to IF-3.

Located on the platform of the 30S subunit, it bridges several disparate RNA helices of the 16S rRNA. Forms part of the Shine-Dalgarno cleft in the 70S ribosome. This Clavibacter sepedonicus (Clavibacter michiganensis subsp. sepedonicus) protein is Small ribosomal subunit protein uS11.